A 52-amino-acid polypeptide reads, in one-letter code: MARFKHVARKLRLAAALKSNRAIPIWVSAKTRLRVRRGFSLRNWRRSKLKNI.

It belongs to the eukaryotic ribosomal protein eL39 family.

This is Large ribosomal subunit protein eL39 from Desulfurococcus amylolyticus (strain DSM 18924 / JCM 16383 / VKM B-2413 / 1221n) (Desulfurococcus kamchatkensis).